Consider the following 312-residue polypeptide: Olfactory receptor 2L5 (312 aa).

Topologically, residues 1-24 are extracellular; the sequence is MENYNQTSTDFILLGLFPPSKIGL. N5 carries N-linked (GlcNAc...) asparagine glycosylation. Residues 25-48 form a helical membrane-spanning segment; the sequence is FLFILFVLIFLMALIGNLSMILLI. Residues 49-56 are Cytoplasmic-facing; that stretch reads FLDTHLHT. The chain crosses the membrane as a helical span at residues 57–78; that stretch reads PMYFLLSQLSLIDLNYISTIVP. The Extracellular portion of the chain corresponds to 79 to 99; sequence KMASDFLYGNKSISFIGCGIQ. A disulfide bridge connects residues C96 and C188. The helical transmembrane segment at 100–119 threads the bilayer; sequence SFFFMTFAGAEALLLTSMAY. At 120–138 the chain is on the cytoplasmic side; it reads DRYVAICFPLHYPIRMSKR. Residues 139 to 157 form a helical membrane-spanning segment; that stretch reads MYVLMITGSWMIGSINSCA. At 158-194 the chain is on the extracellular side; that stretch reads HTVYAFRIPYCKSRAINHFFCDVPAMLTLACTDTWVY. Residues 195–218 form a helical membrane-spanning segment; that stretch reads EYTVFLSSTIFLVFPFTGIACSYG. Residues 219–235 lie on the Cytoplasmic side of the membrane; sequence WVLLAVYRMHSAEGRKK. Residues 236–258 traverse the membrane as a helical segment; it reads AYSTCSTHLTVVTFYYAPFAYTY. Residues 259–271 lie on the Extracellular side of the membrane; sequence LCPRSLRSLTEDK. A helical membrane pass occupies residues 272 to 291; sequence VLAVFYTILTPMLNPIIYSL. Topologically, residues 292–312 are cytoplasmic; it reads RNKEVMGALTRVIQNIFSVKM.

The protein belongs to the G-protein coupled receptor 1 family.

The protein resides in the cell membrane. In terms of biological role, odorant receptor. This chain is Olfactory receptor 2L5 (OR2L5), found in Homo sapiens (Human).